Consider the following 504-residue polypeptide: Histidine--tRNA ligase (504 aa).

It belongs to the class-II aminoacyl-tRNA synthetase family. As to quaternary structure, homodimer.

It localises to the cytoplasm. It catalyses the reaction tRNA(His) + L-histidine + ATP = L-histidyl-tRNA(His) + AMP + diphosphate + H(+). This is Histidine--tRNA ligase from Rhizobium rhizogenes (strain K84 / ATCC BAA-868) (Agrobacterium radiobacter).